Reading from the N-terminus, the 363-residue chain is Endopolygalacturonase A (363 aa).

The N-terminal stretch at 1 to 20 (MQLLQSSVIAATVGAALVAA) is a signal peptide. A propeptide spanning residues 21–28 (VPVELEAR) is cleaved from the precursor. Cys-31 and Cys-46 form a disulfide bridge. PbH1 repeat units lie at residues 158-187 (SDNLNITDVTIDNSAGTAEGHNTDAFDVGS), 188-209 (STYINIDGATVYNQDDCLAINS), 210-230 (GSHITFTNGYCDGGHGLSIGS), 239-260 (VEDVTISNSKVVNSQNGVRIKT), 268-290 (VSNVKFEDITLSGITKYGLIVEQ), and 302-347 (TNGI…SITG). A glycan (N-linked (GlcNAc...) asparagine) is linked at Asn-162. The active-site Proton donor is Asp-202. Cys-204 and Cys-220 form a disulfide bridge. The active site involves His-224. Intrachain disulfides connect Cys-330–Cys-335 and Cys-354–Cys-363.

Belongs to the glycosyl hydrolase 28 family.

Its subcellular location is the secreted. The catalysed reaction is (1,4-alpha-D-galacturonosyl)n+m + H2O = (1,4-alpha-D-galacturonosyl)n + (1,4-alpha-D-galacturonosyl)m.. Involved in maceration and soft-rotting of plant tissue. Hydrolyzes the 1,4-alpha glycosidic bonds of de-esterified pectate in the smooth region of the plant cell wall. This Aspergillus flavus (strain ATCC MYA-384 / AF70) protein is Endopolygalacturonase A (pgaA).